A 256-amino-acid chain; its full sequence is Hydroxyethylthiazole kinase (256 aa).

Methionine 37 serves as a coordination point for substrate. Residues lysine 113 and threonine 159 each contribute to the ATP site. Glycine 186 contacts substrate.

Belongs to the Thz kinase family. Mg(2+) serves as cofactor.

It catalyses the reaction 5-(2-hydroxyethyl)-4-methylthiazole + ATP = 4-methyl-5-(2-phosphooxyethyl)-thiazole + ADP + H(+). Its pathway is cofactor biosynthesis; thiamine diphosphate biosynthesis; 4-methyl-5-(2-phosphoethyl)-thiazole from 5-(2-hydroxyethyl)-4-methylthiazole: step 1/1. Catalyzes the phosphorylation of the hydroxyl group of 4-methyl-5-beta-hydroxyethylthiazole (THZ). The chain is Hydroxyethylthiazole kinase from Exiguobacterium sibiricum (strain DSM 17290 / CCUG 55495 / CIP 109462 / JCM 13490 / 255-15).